The primary structure comprises 155 residues: Aspartate carbamoyltransferase regulatory chain (155 aa).

Residues Cys113, Cys118, Cys139, and Cys142 each contribute to the Zn(2+) site.

It belongs to the PyrI family. In terms of assembly, contains catalytic and regulatory chains. It depends on Zn(2+) as a cofactor.

In terms of biological role, involved in allosteric regulation of aspartate carbamoyltransferase. The sequence is that of Aspartate carbamoyltransferase regulatory chain from Methanoculleus marisnigri (strain ATCC 35101 / DSM 1498 / JR1).